Reading from the N-terminus, the 151-residue chain is UPF0178 protein PMI1258 (151 aa).

This sequence belongs to the UPF0178 family.

The polypeptide is UPF0178 protein PMI1258 (Proteus mirabilis (strain HI4320)).